A 286-amino-acid chain; its full sequence is Glucose import system permease protein GlcT (286 aa).

Transmembrane regions (helical) follow at residues 6–26 (TIIL…LVIW), 71–91 (VILV…LYFL), 103–123 (IVIY…LWLF), 154–174 (LVLV…LAGF), 199–219 (ILIP…FLFS), and 260–280 (VATM…LTVI). An ABC transmembrane type-1 domain is found at 63 to 275 (LLHSIELSVI…LIATIIIIPY (213 aa)).

This sequence belongs to the binding-protein-dependent transport system permease family. In terms of assembly, the complex is composed of two ATP-binding proteins (GlcV), two transmembrane proteins (GlcT and GlcU) and a solute-binding protein (GlcS).

The protein resides in the cell membrane. Its function is as follows. Part of the ABC transporter complex GlcSTUV involved in glucose uptake. Responsible for the translocation of the substrate across the membrane. The protein is Glucose import system permease protein GlcT of Saccharolobus solfataricus (strain ATCC 35092 / DSM 1617 / JCM 11322 / P2) (Sulfolobus solfataricus).